The following is a 157-amino-acid chain: UPF0178 protein BH1374 (157 aa).

This sequence belongs to the UPF0178 family.

In Halalkalibacterium halodurans (strain ATCC BAA-125 / DSM 18197 / FERM 7344 / JCM 9153 / C-125) (Bacillus halodurans), this protein is UPF0178 protein BH1374.